Consider the following 66-residue polypeptide: Large ribosomal subunit protein bL33c (66 aa).

This sequence belongs to the bacterial ribosomal protein bL33 family.

The protein localises to the plastid. Its subcellular location is the chloroplast. This chain is Large ribosomal subunit protein bL33c, found in Oenothera argillicola (Appalachian evening primrose).